Here is a 221-residue protein sequence, read N- to C-terminus: Sugar transporter SWEET1 (221 aa).

Helical transmembrane passes span 3–23, 43–63, 68–88, 102–122, 129–149, 160–180, and 186–206; these read AGGV…LGMF, QFLP…YGVL, TLII…LAYL, ATLL…VPDL, LGLF…ADLA, LSFS…IYGF, and YITV…GLFC. A MtN3/slv 1 domain is found at 10 to 94; sequence FLSSACVLFT…LAYLHYSPQK (85 aa). A MtN3/slv 2 domain is found at 127-212; sequence QQLGLFCSVF…GLFCKYPPEQ (86 aa). The segment at 149-221 is mediates interaction with TRPV2; the sequence is AKIVQTKSTQ…QDRKYRLLQT (73 aa).

Belongs to the SWEET sugar transporter family. Interacts with TRPV2; the interaction probably occurs intracellularly and depends on TRPV2 N-glycosylation. Expressed at high levels in lung, placenta, spleen and thymus, at intermediate levels in brain, heart, kidney and testis, and at low levels in bone marrow, liver and lymph node. Within the thymus expression is highest in non-lymphoid cells.

It is found in the golgi apparatus membrane. The protein localises to the cell membrane. Functionally, mediates sugar transport across membranes. May regulate the expression of RAG1 a gene involved in V(D)J recombination. This chain is Sugar transporter SWEET1 (Slc50a1), found in Mus musculus (Mouse).